We begin with the raw amino-acid sequence, 130 residues long: Protein YchQ (130 aa).

Residues 1-9 (MTSFSTLLS) lie on the Periplasmic side of the membrane. A helical transmembrane segment spans residues 10 to 28 (VHLISIALSVGLLTLRFWL). Topologically, residues 29-39 (RYQKHPQAFAR) are cytoplasmic. Residues 40-59 (WTRIVPPVVDTLLLLSGIAL) form a helical membrane-spanning segment. At 60–73 (MAKAHILPFSGQAQ) the chain is on the periplasmic side. A helical transmembrane segment spans residues 74–93 (WLTEKLFGVIIYIVLGFIAL). The Cytoplasmic portion of the chain corresponds to 94–104 (DYRRMHSQQAR). A helical transmembrane segment spans residues 105-124 (IIAFPLALVVLYIIIKLATT). Residues 125 to 130 (KVPLLG) lie on the Periplasmic side of the membrane.

It belongs to the SirB2 family.

It is found in the cell inner membrane. This Escherichia coli (strain K12) protein is Protein YchQ (ychQ).